A 302-amino-acid chain; its full sequence is Putative receptor-like protein 16 (302 aa).

3 LRR repeats span residues 1-19 (MNLT…LGNM), 20-43 (EMIE…FLKG), and 45-70 (DSLI…NFFS). The stretch at 72 to 91 (LELSMDNNLFTGKIGRGLQS) is one LRR 4; degenerate repeat. 7 LRR repeats span residues 92-115 (LRSL…WFDQ), 116-140 (LQDL…LFNM), 142-164 (SLQL…ISGY), 166-188 (ALKV…LLGK), 190-211 (IIVL…INTQ), 213-234 (IRIL…LCAV), and 235-258 (RSIH…LRNA).

It belongs to the RLP family.

In Arabidopsis thaliana (Mouse-ear cress), this protein is Putative receptor-like protein 16.